The sequence spans 170 residues: Shikimate kinase (170 aa).

11 to 16 serves as a coordination point for ATP; it reads LSGKST. Ser-15 provides a ligand contact to Mg(2+). Residues Asp-33, Arg-57, and Gly-79 each contribute to the substrate site. Arg-119 provides a ligand contact to ATP. Arg-137 is a substrate binding site.

This sequence belongs to the shikimate kinase family. As to quaternary structure, monomer. The cofactor is Mg(2+).

It is found in the cytoplasm. The enzyme catalyses shikimate + ATP = 3-phosphoshikimate + ADP + H(+). Its pathway is metabolic intermediate biosynthesis; chorismate biosynthesis; chorismate from D-erythrose 4-phosphate and phosphoenolpyruvate: step 5/7. Functionally, catalyzes the specific phosphorylation of the 3-hydroxyl group of shikimic acid using ATP as a cosubstrate. In Clostridium botulinum (strain ATCC 19397 / Type A), this protein is Shikimate kinase.